The chain runs to 129 residues: Small ribosomal subunit protein uS11 (129 aa).

This sequence belongs to the universal ribosomal protein uS11 family. In terms of assembly, part of the 30S ribosomal subunit. Interacts with proteins S7 and S18. Binds to IF-3.

Functionally, located on the platform of the 30S subunit, it bridges several disparate RNA helices of the 16S rRNA. Forms part of the Shine-Dalgarno cleft in the 70S ribosome. This is Small ribosomal subunit protein uS11 from Azorhizobium caulinodans (strain ATCC 43989 / DSM 5975 / JCM 20966 / LMG 6465 / NBRC 14845 / NCIMB 13405 / ORS 571).